Consider the following 83-residue polypeptide: Kappa-ctenitoxin-Pn1a (83 aa).

An N-terminal signal peptide occupies residues 1 to 21; that stretch reads MWFKIQVLVLAITLITLGIQA. Positions 22–37 are excised as a propeptide; it reads EPNSSPNNPLIVEEDR. Cystine bridges form between Cys40/Cys55, Cys47/Cys60, Cys54/Cys71, and Cys62/Cys69. Positions 78-83 are excised as a propeptide; sequence LFGFGK.

The protein belongs to the neurotoxin 02 (plectoxin) family. Expressed by the venom gland.

The protein resides in the secreted. Antagonist of L-type calcium channels (Cav1/CACNA1). In GH3 neuroendocrinal cell line, it reversibly inhibits the A-type potassium current but does not block other potassium currents or calcium channels. Shows an important acetylcholine-mediated antiarrhythmogenic effect in isolated hearts. In vivo, causes paralysis in the posterior limbs and gradual decreases in movement and aggression during 24 hours at dose levels of 5 ug per mouse. The chain is Kappa-ctenitoxin-Pn1a from Phoneutria nigriventer (Brazilian armed spider).